A 159-amino-acid chain; its full sequence is Membrane protein FAM174B (159 aa).

The first 27 residues, 1–27, serve as a signal peptide directing secretion; sequence MRAALPPARLLPLLLLLALLGAPAARA. Residues 28-73 form a disordered region; it reads SRAQSAAPPQPGAERQPRPPPGPGPGNATGTGSGEAAGGGGSSNSS. Residues 28-90 lie on the Extracellular side of the membrane; sequence SRAQSAAPPQ…ISSLLRDLHT (63 aa). The span at 52 to 69 shows a compositional bias: gly residues; the sequence is PGNATGTGSGEAAGGGGS. An N-linked (GlcNAc...) asparagine glycan is attached at N54. A helical transmembrane segment spans residues 91–111; sequence LKAAVIVACAFTAFLIACLLL. Residues 112 to 159 are Cytoplasmic-facing; that stretch reads RVFRSGKRLKKTRKYDIITTPAERVEMAPLNEEDDEDEDSTVFDIKYR.

Belongs to the FAM174 family.

It localises to the cell membrane. Its subcellular location is the golgi apparatus. In terms of biological role, essential for Golgi structural integrity. The polypeptide is Membrane protein FAM174B (FAM174B) (Bos taurus (Bovine)).